A 463-amino-acid polypeptide reads, in one-letter code: Chromosomal replication initiator protein DnaA (463 aa).

Positions 1–83 are domain I, interacts with DnaA modulators; it reads MSLTLWQQCL…LRFEVGSKPV (83 aa). Residues 83–126 are domain II; that stretch reads VAQAISQPVMVSAHASAPGVVSRPAPTRPSWDNVPALAELSYRS. A domain III, AAA+ region region spans residues 127–343; that stretch reads NVNTKHNFDN…GALNRVIANA (217 aa). ATP contacts are provided by Gly171, Gly173, Lys174, and Thr175. The domain IV, binds dsDNA stretch occupies residues 344-463; that stretch reads NFTGRAITID…FSNLIRTLSS (120 aa).

This sequence belongs to the DnaA family. Oligomerizes as a right-handed, spiral filament on DNA at oriC.

Its subcellular location is the cytoplasm. Its function is as follows. Plays an essential role in the initiation and regulation of chromosomal replication. ATP-DnaA binds to the origin of replication (oriC) to initiate formation of the DNA replication initiation complex once per cell cycle. Binds the DnaA box (a 9 base pair repeat at the origin) and separates the double-stranded (ds)DNA. Forms a right-handed helical filament on oriC DNA; dsDNA binds to the exterior of the filament while single-stranded (ss)DNA is stabiized in the filament's interior. The ATP-DnaA-oriC complex binds and stabilizes one strand of the AT-rich DNA unwinding element (DUE), permitting loading of DNA polymerase. After initiation quickly degrades to an ADP-DnaA complex that is not apt for DNA replication. Binds acidic phospholipids. This Erwinia tasmaniensis (strain DSM 17950 / CFBP 7177 / CIP 109463 / NCPPB 4357 / Et1/99) protein is Chromosomal replication initiator protein DnaA.